We begin with the raw amino-acid sequence, 209 residues long: Fibroblast growth factor 10 (209 aa).

Residues 1 to 36 (MWKWILTHCASAFPHLPGCCCCFLLLFLVSSFPVTC) form the signal peptide. 2 N-linked (GlcNAc...) asparagine glycosylation sites follow: N50 and N197.

This sequence belongs to the heparin-binding growth factors family. In terms of assembly, interacts with FGFR1 and FGFR2. Interacts with FGFBP1. Expressed abundantly in embryos and the lung, and at much lower levels in brain and heart.

The protein localises to the secreted. Plays an important role in the regulation of embryonic development, cell proliferation and cell differentiation. Required for normal branching morphogenesis. May play a role in wound healing. The sequence is that of Fibroblast growth factor 10 (Fgf10) from Mus musculus (Mouse).